We begin with the raw amino-acid sequence, 178 residues long: UPF0228 protein MA_4223 (178 aa).

It belongs to the UPF0228 family.

The protein is UPF0228 protein MA_4223 of Methanosarcina acetivorans (strain ATCC 35395 / DSM 2834 / JCM 12185 / C2A).